Here is a 262-residue protein sequence, read N- to C-terminus: Caffeyl-CoA reductase-Etf complex subunit CarD (262 aa).

It belongs to the ETF beta-subunit/FixA family. In terms of assembly, part of the homotrimeric caffeyl-CoA reductase-Etf complex composed of (R)-2-hydroxyisocaproyl-CoA dehydratase CarC, and the electron transfer flavoprotein (ETF) alpha (CarE) and beta (CarD) subunits. It depends on FAD as a cofactor. The cofactor is AMP.

Its subcellular location is the cytoplasm. It carries out the reaction hydrocaffeoyl-CoA + 2 reduced [2Fe-2S]-[ferredoxin] + 2 NAD(+) = (E)-caffeoyl-CoA + 2 oxidized [2Fe-2S]-[ferredoxin] + 2 NADH. Its function is as follows. Caffeyl-CoA reductase-Etf complex catalyzes the reduction of caffeyl-CoA to yield hydrocaffeyl-CoA. It couples the endergonic ferredoxin reduction with NADH as reductant to the exergonic reduction of caffeoyl-CoA with the same reductant. It uses the mechanism of electron bifurcation to overcome the steep energy barrier in ferredoxin reduction. The electron transfer flavoprotein (Etf) mediates the electron transfer between the different donors and acceptors. The complex can also reduce 4-coumaroyl-CoA and feruloyl-CoA. The chain is Caffeyl-CoA reductase-Etf complex subunit CarD from Acetobacterium woodii (strain ATCC 29683 / DSM 1030 / JCM 2381 / KCTC 1655 / WB1).